The primary structure comprises 327 residues: Ribose-phosphate pyrophosphokinase (327 aa).

ATP-binding positions include Asn-46–Glu-48 and Arg-105–Gln-106. Mg(2+)-binding residues include His-139 and Asp-179. Residue Lys-203 is part of the active site. Residues Arg-205, Asp-231, and Asp-235–Thr-239 contribute to the D-ribose 5-phosphate site.

This sequence belongs to the ribose-phosphate pyrophosphokinase family. Class I subfamily. In terms of assembly, homohexamer. Mg(2+) is required as a cofactor.

It localises to the cytoplasm. The enzyme catalyses D-ribose 5-phosphate + ATP = 5-phospho-alpha-D-ribose 1-diphosphate + AMP + H(+). The protein operates within metabolic intermediate biosynthesis; 5-phospho-alpha-D-ribose 1-diphosphate biosynthesis; 5-phospho-alpha-D-ribose 1-diphosphate from D-ribose 5-phosphate (route I): step 1/1. Its function is as follows. Involved in the biosynthesis of the central metabolite phospho-alpha-D-ribosyl-1-pyrophosphate (PRPP) via the transfer of pyrophosphoryl group from ATP to 1-hydroxyl of ribose-5-phosphate (Rib-5-P). This chain is Ribose-phosphate pyrophosphokinase, found in Mycobacterium leprae (strain TN).